A 393-amino-acid chain; its full sequence is L-methionine gamma-lyase (393 aa).

Residues 63-65 (YQR) and 93-94 (GM) each bind pyridoxal 5'-phosphate. An L-homocysteine-binding site is contributed by Y119. Pyridoxal 5'-phosphate is bound at residue 206-208 (SAT). K209 carries the post-translational modification N6-(pyridoxal phosphate)lysine. R367 contributes to the L-homocysteine binding site. R367 serves as a coordination point for L-methionine.

Belongs to the trans-sulfuration enzymes family. L-methionine gamma-lyase subfamily. As to quaternary structure, homotetramer. Pyridoxal 5'-phosphate serves as cofactor.

It catalyses the reaction L-methionine + H2O = methanethiol + 2-oxobutanoate + NH4(+). It carries out the reaction L-homocysteine + H2O = 2-oxobutanoate + hydrogen sulfide + NH4(+) + H(+). Catalyzes the alpha,gamma-elimination of L-methionine to produce methanethiol, 2-oxobutanoate and ammonia. Is also able to catalyze the alpha,gamma-elimination of L-homocysteine. This Brevibacterium sandarakinum protein is L-methionine gamma-lyase.